Consider the following 494-residue polypeptide: Cytochrome P450 2G1 (494 aa).

C439 lines the heme pocket.

It belongs to the cytochrome P450 family. It depends on heme as a cofactor. As to expression, olfactory epithelium.

The protein localises to the endoplasmic reticulum membrane. The protein resides in the microsome membrane. It catalyses the reaction an organic molecule + reduced [NADPH--hemoprotein reductase] + O2 = an alcohol + oxidized [NADPH--hemoprotein reductase] + H2O + H(+). Cytochromes P450 are a group of heme-thiolate monooxygenases. This isozyme seems to be implicated in olfaction. The chain is Cytochrome P450 2G1 (Cyp2g1) from Rattus norvegicus (Rat).